We begin with the raw amino-acid sequence, 933 residues long: Exosome complex exonuclease RRP44 homolog A (933 aa).

The PINc domain maps to 50-163 (KIIVVDTNVV…LVTNDRENKR (114 aa)). Residues 217–321 (QEHKPMSEIT…NVDDAPRTSN (105 aa)) enclose the CSD1 domain. Residues 296-336 (AEEDDEEDDTVHLAPDNVDDAPRTSNLSHETSGDKNAAPVR) are disordered. The 68-residue stretch at 371–438 (ALFVSKDRRI…ETEVVLIEND (68 aa)) folds into the CSD2 domain. The RNB domain maps to 469-798 (RQDLRHLLVF…FVHRLLAASL (330 aa)). Mg(2+)-binding residues include Asp481 and Asp490.

This sequence belongs to the RNR ribonuclease family. As to quaternary structure, probable component of the RNA exosome complex. Mg(2+) is required as a cofactor.

Its subcellular location is the nucleus. Functionally, catalytic component of the RNA exosome complex which has 3'-&gt;5' exoribonuclease activity and participates in a multitude of cellular RNA processing and degradation events. Required for 5.8S rRNA intermediate processing and the degradation of 5' external transcribed spacer (5' ETS), a maturation by-product of rRNA synthesis. Is not involved in the degradation of turnip crinkle virus (TCV) RNA and significant virus resistance. Required for normal development of female gametophytes and early embryogenesis. The polypeptide is Exosome complex exonuclease RRP44 homolog A (Arabidopsis thaliana (Mouse-ear cress)).